The sequence spans 324 residues: Dehydrogenase/reductase SDR family member 7C-A (324 aa).

A signal peptide spans 1-17; that stretch reads MAVPSVMVLPLLIVVFA. An NAD(+)-binding site is contributed by 41-65; the sequence is VITDAVSGMGSECARLFHAGGARLV. Ser178 contacts substrate. The Proton acceptor role is filled by Tyr191.

The protein belongs to the short-chain dehydrogenases/reductases (SDR) family.

It is found in the secreted. Functionally, putative oxidoreductase. In Danio rerio (Zebrafish), this protein is Dehydrogenase/reductase SDR family member 7C-A (dhrs7ca).